The chain runs to 115 residues: Putative membrane protein insertion efficiency factor (115 aa).

Positions 81-115 are disordered; the sequence is DPRPGRCGCKDAGPAVSAGSTEGNPGRRTDGTDPD. The segment covering 105–115 has biased composition (basic and acidic residues); sequence PGRRTDGTDPD.

Belongs to the UPF0161 family.

It localises to the cell inner membrane. In terms of biological role, could be involved in insertion of integral membrane proteins into the membrane. This chain is Putative membrane protein insertion efficiency factor, found in Rhodospirillum rubrum (strain ATCC 11170 / ATH 1.1.1 / DSM 467 / LMG 4362 / NCIMB 8255 / S1).